The sequence spans 311 residues: UPF0324 membrane protein VV1_3166 (311 aa).

10 helical membrane-spanning segments follow: residues 8 to 28 (FIFA…ALVL), 51 to 71 (LLSY…AIAV), 74 to 94 (DGIG…FLVA), 106 to 126 (LISA…APAI), 133 to 153 (IALA…IFPV), 165 to 185 (FGTW…AASA), 197 to 217 (LKLA…ILFA), 228 to 248 (LVLP…DLFP), 256 to 276 (GIFS…GCSI), and 289 to 309 (LIFG…WLLL).

This sequence belongs to the UPF0324 family.

The protein resides in the cell membrane. The chain is UPF0324 membrane protein VV1_3166 from Vibrio vulnificus (strain CMCP6).